A 3093-amino-acid polypeptide reads, in one-letter code: Genome polyprotein (3093 aa).

Residues 255-403 (KRLLRHVHQA…TTTGERIEYY (149 aa)) enclose the Peptidase S30 domain. Catalysis depends on for P1 proteinase activity residues histidine 311, aspartate 323, and serine 355. The Peptidase C6 domain maps to 690-809 (HYVPKVGYCY…ASELKEYEIG (120 aa)). Residues cysteine 698 and histidine 769 each act as for helper component proteinase activity in the active site. Positions 1215–1366 (RVLADKDNEF…AQKSLDIMTL (152 aa)) constitute a Helicase ATP-binding domain. ATP is bound at residue 1228–1235 (GHVGCGKS). The short motif at 1316-1319 (DEVH) is the DEVH box element. The 180-residue stretch at 1367-1546 (PTMTPLDFVK…QVPPVLRNVN (180 aa)) folds into the Helicase C-terminal domain. The Nuclear localization signal signature appears at 1883–1895 (DKVRKKANVHAMQ). Tyrosine 1915 is subject to O-(5'-phospho-RNA)-tyrosine. In terms of domain architecture, Peptidase C4 spans 2041-2257 (SKALYGGPRC…VDVGGLYIHN (217 aa)). Residues histidine 2082, aspartate 2121, and cysteine 2193 each act as for nuclear inclusion protein A activity in the active site. A RdRp catalytic domain is found at 2516 to 2639 (EWFIDADGSQ…NANEEAKDVV (124 aa)). Low complexity predominate over residues 2800-2826 (NAAATSGATTPAQNVGAGTTTPAKATP). The interval 2800–2842 (NAAATSGATTPAQNVGAGTTTPAKATPQSGRRPSFGSLIDNPI) is disordered.

This sequence belongs to the potyviridae genome polyprotein family. VPg is uridylylated by the polymerase and is covalently attached to the 5'-end of the genomic RNA. This uridylylated form acts as a nucleotide-peptide primer for the polymerase. Post-translationally, genome polyprotein of potyviruses undergoes post-translational proteolytic processing by the main proteinase NIa-pro resulting in the production of at least ten individual proteins. The P1 proteinase and the HC-pro cleave only their respective C-termini autocatalytically. 6K1 is essential for proper proteolytic separation of P3 from CI.

It is found in the host cytoplasmic vesicle. The protein localises to the virion. It carries out the reaction RNA(n) + a ribonucleoside 5'-triphosphate = RNA(n+1) + diphosphate. It catalyses the reaction Hydrolyzes glutaminyl bonds, and activity is further restricted by preferences for the amino acids in P6 - P1' that vary with the species of potyvirus, e.g. Glu-Xaa-Xaa-Tyr-Xaa-Gln-|-(Ser or Gly) for the enzyme from tobacco etch virus. The natural substrate is the viral polyprotein, but other proteins and oligopeptides containing the appropriate consensus sequence are also cleaved.. The enzyme catalyses Hydrolyzes a Gly-|-Gly bond at its own C-terminus, commonly in the sequence -Tyr-Xaa-Val-Gly-|-Gly, in the processing of the potyviral polyprotein.. Required for aphid transmission and also has proteolytic activity. Only cleaves a Gly-Gly dipeptide at its own C-terminus. Interacts with virions and aphid stylets. Acts as a suppressor of RNA-mediated gene silencing, also known as post-transcriptional gene silencing (PTGS), a mechanism of plant viral defense that limits the accumulation of viral RNAs. May have RNA-binding activity. Its function is as follows. Has helicase activity. It may be involved in replication. Functionally, indispensable for virus replication. Reduces the abundance of host transcripts related to jasmonic acid biosynthesis therefore altering the host defenses. In order to increase its own stability, decreases host protein degradation pathways. In terms of biological role, indispensable for virus replication. Mediates the cap-independent, EIF4E-dependent translation of viral genomic RNAs. Binds to the cap-binding site of host EIF4E and thus interferes with the host EIF4E-dependent mRNA export and translation. VPg-RNA directly binds EIF4E and is a template for transcription. Also forms trimeric complexes with EIF4E-EIF4G, which are templates for translation. Its function is as follows. Has RNA-binding and proteolytic activities. Functionally, an RNA-dependent RNA polymerase that plays an essential role in the virus replication. In terms of biological role, involved in aphid transmission, cell-to-cell and systemis movement, encapsidation of the viral RNA and in the regulation of viral RNA amplification. This Brome streak virus (strain 11-Cal) (BStV) protein is Genome polyprotein.